Consider the following 575-residue polypeptide: GBF-interacting protein 1-like (575 aa).

Disordered stretches follow at residues 66–171 and 229–296; these read SKRE…SKSD and SSSN…VVHS. 3 stretches are compositionally biased toward polar residues: residues 90 to 102, 115 to 138, and 161 to 171; these read FASSNSYQGSGRN, TRGSRTAQPATNKASNITVPNETK, and ISASRCSSKSD. Basic and acidic residues predominate over residues 268–281; the sequence is AREETSTVSEDKDY.

It belongs to the GIP1 family. In terms of tissue distribution, expressed in roots, leaves, stems and flowers.

It localises to the nucleus. In terms of biological role, may act as a transcriptional coactivator of LOB domain-containing proteins. This Arabidopsis thaliana (Mouse-ear cress) protein is GBF-interacting protein 1-like.